We begin with the raw amino-acid sequence, 146 residues long: Hemoglobin subunit beta (146 aa).

Residues Q2–H146 enclose the Globin domain. Heme b is bound by residues H63 and H92.

The protein belongs to the globin family. In terms of assembly, heterotetramer of two alpha chains and two beta chains. In terms of tissue distribution, red blood cells.

Its function is as follows. Involved in oxygen transport from the lung to the various peripheral tissues. The protein is Hemoglobin subunit beta (HBB) of Apus apus (Common swift).